The primary structure comprises 493 residues: Lysine--tRNA ligase (493 aa).

Positions 26 to 34 (PSGHIHLGN) match the 'HIGH' region motif. A 'KMSKS' region motif is present at residues 270–274 (AMKSS).

It belongs to the class-I aminoacyl-tRNA synthetase family.

The protein localises to the cytoplasm. It carries out the reaction tRNA(Lys) + L-lysine + ATP = L-lysyl-tRNA(Lys) + AMP + diphosphate. This chain is Lysine--tRNA ligase (lysS), found in Archaeoglobus fulgidus (strain ATCC 49558 / DSM 4304 / JCM 9628 / NBRC 100126 / VC-16).